A 554-amino-acid chain; its full sequence is MTAPCSQPAQLPGRRQLGLVPFPPPPPRTPLLWLLLLLLAAVAPARGWESGDLELFDLVEEVQLNFYQFLGVQQDASSADIRKAYRKLSLTLHPDKNKDENAETQFRQLVAIYEVLKDDERRQRYDDILINGLPDWRQPVFYYRRVRKMSNAELALLLFIILTVGHYAVVWSIYLEKQLDELLSRKKREKKKKTGSKSVDVSKLGASEKNERLLMKPQWHDLLPCKLGIWFCLTLKALPHLIQDAGQFYAKYKETRLKEKEDALTRTELETLQKQKKVKKPKPEFPVYTPLETTYIQSYDHGTSIEEIEEQMDDWLENRNRTQKKQAPEWTEEDLSQLTRSMVKFPGGTPGRWEKIAHELGRSVTDVTTKAKQLKDSVTCSPGMVRLSELKSTVQNSRPIKTATTLPDDMITQREDAEGVAAEEEQEGDSGEQETGATDARPRRRKPARLLEATAKPEPEEKSRAKRQKDFDIAEQNESSDEESLRKERARSAEEPWTQNQQKLLELALQQYPRGSSDRWDKIARCVPSKSKEDCIARYKLLVELVQKKKQAKS.

An N-terminal signal peptide occupies residues 1–47 (MTAPCSQPAQLPGRRQLGLVPFPPPPPRTPLLWLLLLLLAAVAPARG). Topologically, residues 48–153 (WESGDLELFD…RRVRKMSNAE (106 aa)) are lumenal. In terms of domain architecture, J spans 65–129 (NFYQFLGVQQ…ERRQRYDDIL (65 aa)). Residues 154–174 (LALLLFIILTVGHYAVVWSIY) form a helical membrane-spanning segment. Residues 175–554 (LEKQLDELLS…LVQKKKQAKS (380 aa)) are Cytoplasmic-facing. Residues 325-379 (KQAPEWTEEDLSQLTRSMVKFPGGTPGRWEKIAHELGRSVTDVTTKAKQLKDSVT) enclose the SANT 1 domain. Position 381 is a phosphoserine (serine 381). Residues 392–405 (STVQNSRPIKTATT) are compositionally biased toward polar residues. Residues 392-500 (STVQNSRPIK…RSAEEPWTQN (109 aa)) are disordered. Residues 421–432 (AAEEEQEGDSGE) are compositionally biased toward acidic residues. A Phosphoserine modification is found at serine 430. The span at 455–472 (AKPEPEEKSRAKRQKDFD) shows a compositional bias: basic and acidic residues. Residues 473-482 (IAEQNESSDE) are compositionally biased toward acidic residues. Serine 479, serine 480, serine 484, and serine 492 each carry phosphoserine. Residues 483–494 (ESLRKERARSAE) are compositionally biased toward basic and acidic residues. Residues 492 to 547 (SAEEPWTQNQQKLLELALQQYPRGSSDRWDKIARCVPSKSKEDCIARYKLLVELVQ) form the SANT 2 domain.

Interacts (via J domain) with HSPA5. Interacts (via cytosolic domain) with ribosomes. Interacts (via SANT 2 domain) with SERPINA3; the interaction delays the formation of the covalent inhibitory complex SERPINA3-chymotrypsin, but does not alter the catalytic activity of SERPINA3. Interacts (via SANT 2 domain) with ITIH4 (via C-terminus); the interaction protects ITIH4 against in vitro cleavage by kallikrein.

The protein localises to the endoplasmic reticulum membrane. The protein resides in the nucleus membrane. It is found in the microsome membrane. Its function is as follows. May modulate protein synthesis. The chain is DnaJ homolog subfamily C member 1 (DNAJC1) from Homo sapiens (Human).